The following is a 194-amino-acid chain: Mitochondrial import inner membrane translocase subunit Tim22 (194 aa).

Intrachain disulfides connect cysteine 69/cysteine 141 and cysteine 160/cysteine 179. 3 consecutive transmembrane segments (helical) span residues 74 to 94, 123 to 143, and 170 to 190; these read VLAC…TAGI, MSYA…ECLV, and AGVK…AAID.

Belongs to the Tim17/Tim22/Tim23 family. As to quaternary structure, component of the TIM22 complex, whose core is composed of TIMM22, associated with peripheral protein FXC1/TIMM10B and the 70 kDa heterohexamer. In most cases, the 70 kDa complex is composed of TIMM9 and TIMM10 (TIMM10A or TIMM10B). A small fraction of the 70 kDa complex is composed of TIMM8 (TIMM8A/DDP1 or TIMM8B/DDP2) and TIMM13. The TIM22 complex also contains AGK and TIMM29. Interacts directly with TIMM9, TIMM10A and FXC1/TIMM10B. Interacts (when oxidized) with TIMM29; interaction is direct. Disulfide bonds promote efficient assembly of the TIM22 complex.

Its subcellular location is the mitochondrion inner membrane. Functionally, essential core component of the TIM22 complex, a complex that mediates the import and insertion of multi-pass transmembrane proteins into the mitochondrial inner membrane. In the TIM22 complex, it constitutes the voltage-activated and signal-gated channel. Forms a twin-pore translocase that uses the membrane potential as external driving force in 2 voltage-dependent steps. In Mus musculus (Mouse), this protein is Mitochondrial import inner membrane translocase subunit Tim22 (Timm22).